Here is a 977-residue protein sequence, read N- to C-terminus: Alanine--tRNA ligase (977 aa).

The segment at S512–S535 is disordered. Positions 618, 622, 720, and 724 each coordinate Zn(2+).

The protein belongs to the class-II aminoacyl-tRNA synthetase family. Requires Zn(2+) as cofactor.

The protein resides in the cytoplasm. It catalyses the reaction tRNA(Ala) + L-alanine + ATP = L-alanyl-tRNA(Ala) + AMP + diphosphate. Its function is as follows. Catalyzes the attachment of alanine to tRNA(Ala) in a two-step reaction: alanine is first activated by ATP to form Ala-AMP and then transferred to the acceptor end of tRNA(Ala). Also edits incorrectly charged Ser-tRNA(Ala) and Gly-tRNA(Ala) via its editing domain. The polypeptide is Alanine--tRNA ligase (Leptospira interrogans serogroup Icterohaemorrhagiae serovar Lai (strain 56601)).